A 245-amino-acid polypeptide reads, in one-letter code: 6-carboxyhexanoate--CoA ligase (245 aa).

It belongs to the BioW family. Homodimer. Mg(2+) serves as cofactor.

The catalysed reaction is heptanedioate + ATP + CoA = 6-carboxyhexanoyl-CoA + AMP + diphosphate. The protein operates within metabolic intermediate metabolism; pimeloyl-CoA biosynthesis; pimeloyl-CoA from pimelate: step 1/1. Catalyzes the transformation of pimelate into pimeloyl-CoA with concomitant hydrolysis of ATP to AMP. This Sulfurihydrogenibium sp. (strain YO3AOP1) protein is 6-carboxyhexanoate--CoA ligase.